A 455-amino-acid polypeptide reads, in one-letter code: Bifunctional protein GlmU (455 aa).

A pyrophosphorylase region spans residues 1 to 230 (MANRFAVILA…FDETIGINDR (230 aa)). UDP-N-acetyl-alpha-D-glucosamine-binding positions include 9-12 (LAAG), Lys-23, Gln-73, and 78-79 (GT). Mg(2+) is bound at residue Asp-103. UDP-N-acetyl-alpha-D-glucosamine contacts are provided by Gly-140, Glu-155, Asn-170, and Asn-228. Asn-228 serves as a coordination point for Mg(2+). Residues 231–251 (IALAEAEKIMKKRINEQHMRN) form a linker region. The N-acetyltransferase stretch occupies residues 252–455 (GVSIIDPEQT…KEEYASKFKK (204 aa)). Positions 333 and 351 each coordinate UDP-N-acetyl-alpha-D-glucosamine. His-363 acts as the Proton acceptor in catalysis. The UDP-N-acetyl-alpha-D-glucosamine site is built by Tyr-366 and Asn-377. Acetyl-CoA-binding positions include 386-387 (NY), Ala-423, and Arg-440.

The protein in the N-terminal section; belongs to the N-acetylglucosamine-1-phosphate uridyltransferase family. It in the C-terminal section; belongs to the transferase hexapeptide repeat family. In terms of assembly, homotrimer. Mg(2+) serves as cofactor.

It localises to the cytoplasm. It catalyses the reaction alpha-D-glucosamine 1-phosphate + acetyl-CoA = N-acetyl-alpha-D-glucosamine 1-phosphate + CoA + H(+). The enzyme catalyses N-acetyl-alpha-D-glucosamine 1-phosphate + UTP + H(+) = UDP-N-acetyl-alpha-D-glucosamine + diphosphate. Its pathway is nucleotide-sugar biosynthesis; UDP-N-acetyl-alpha-D-glucosamine biosynthesis; N-acetyl-alpha-D-glucosamine 1-phosphate from alpha-D-glucosamine 6-phosphate (route II): step 2/2. The protein operates within nucleotide-sugar biosynthesis; UDP-N-acetyl-alpha-D-glucosamine biosynthesis; UDP-N-acetyl-alpha-D-glucosamine from N-acetyl-alpha-D-glucosamine 1-phosphate: step 1/1. It functions in the pathway bacterial outer membrane biogenesis; LPS lipid A biosynthesis. Catalyzes the last two sequential reactions in the de novo biosynthetic pathway for UDP-N-acetylglucosamine (UDP-GlcNAc). The C-terminal domain catalyzes the transfer of acetyl group from acetyl coenzyme A to glucosamine-1-phosphate (GlcN-1-P) to produce N-acetylglucosamine-1-phosphate (GlcNAc-1-P), which is converted into UDP-GlcNAc by the transfer of uridine 5-monophosphate (from uridine 5-triphosphate), a reaction catalyzed by the N-terminal domain. In Oceanobacillus iheyensis (strain DSM 14371 / CIP 107618 / JCM 11309 / KCTC 3954 / HTE831), this protein is Bifunctional protein GlmU.